The sequence spans 471 residues: tRNA-2-methylthio-N(6)-dimethylallyladenosine synthase (471 aa).

The MTTase N-terminal domain occupies 31–149; sequence LYYHIETYGC…FPQLLWEALN (119 aa). [4Fe-4S] cluster is bound by residues Cys-40, Cys-76, Cys-110, Cys-186, Cys-190, and Cys-193. The Radical SAM core domain maps to 172–402; the sequence is RDSNLKAWVN…IELQNKISLE (231 aa). Positions 405–468 constitute a TRAM domain; that stretch reads AELRGKIVEV…AWTMQGELVE (64 aa).

It belongs to the methylthiotransferase family. MiaB subfamily. As to quaternary structure, monomer. Requires [4Fe-4S] cluster as cofactor.

The protein localises to the cytoplasm. The enzyme catalyses N(6)-dimethylallyladenosine(37) in tRNA + (sulfur carrier)-SH + AH2 + 2 S-adenosyl-L-methionine = 2-methylsulfanyl-N(6)-dimethylallyladenosine(37) in tRNA + (sulfur carrier)-H + 5'-deoxyadenosine + L-methionine + A + S-adenosyl-L-homocysteine + 2 H(+). Functionally, catalyzes the methylthiolation of N6-(dimethylallyl)adenosine (i(6)A), leading to the formation of 2-methylthio-N6-(dimethylallyl)adenosine (ms(2)i(6)A) at position 37 in tRNAs that read codons beginning with uridine. In Thermoanaerobacter sp. (strain X514), this protein is tRNA-2-methylthio-N(6)-dimethylallyladenosine synthase.